A 1692-amino-acid polypeptide reads, in one-letter code: Regulating synaptic membrane exocytosis protein 1 (1692 aa).

The disordered stretch occupies residues 1 to 26 (MSSAVGPRGPRPPTVPPPMQELPDLS). Residues 9–20 (GPRPPTVPPPMQ) are compositionally biased toward pro residues. The RabBD domain occupies 22-182 (LPDLSHLTEE…TKSGAWFFGS (161 aa)). The segment at 110–170 (KDDAPTCGIC…VCNLCRKQQE (61 aa)) adopts an FYVE-type zinc-finger fold. Residues Cys-116, Cys-119, Cys-132, Cys-135, Cys-140, Cys-143, Cys-162, and Cys-165 each contribute to the Zn(2+) site. Residues 183–199 (GPQQTSQDGTLSDTATG) are compositionally biased toward polar residues. The disordered stretch occupies residues 183 to 555 (GPQQTSQDGT…CEDVELESES (373 aa)). Residues 204–217 (VPREKKARLQERSR) are compositionally biased toward basic and acidic residues. Residues 223–234 (STAAASSQDAAP) show a composition bias toward low complexity. The segment covering 305 to 357 (VEERERKERRESRRLEKGRSQDYPDTPEKRDEGKAADEEKQRKEEDYQTRYRS) has biased composition (basic and acidic residues). Over residues 377 to 388 (MHARVSRARHER) the composition is skewed to basic residues. Residues 412 to 430 (RAPAAARASPPDSPRAYSA) are compositionally biased toward low complexity. Residues 462 to 475 (PELKAQEPLRKQSR) show a composition bias toward basic and acidic residues. The segment covering 497-509 (RNDSLSSDQSESV) has biased composition (polar residues). Residue Ser-500 is modified to Phosphoserine. Residues 515 to 527 (KPHRSKRGGKKRQ) are compositionally biased toward basic residues. Over residues 545–555 (SCEDVELESES) the composition is skewed to acidic residues. Ser-578 carries the phosphoserine modification. Residues 605–691 (RTTMPKDSGA…EPQVEIIVSR (87 aa)) enclose the PDZ domain. The segment at 698–732 (RIPESSHPPLESSSSSFESQKMERPSISVISPTSP) is disordered. A compositionally biased stretch (low complexity) spans 700–716 (PESSHPPLESSSSSFES). Ser-728 and Ser-731 each carry phosphoserine. Residues 742–865 (LPGQLSVKLW…ALLDDEPHWY (124 aa)) enclose the C2 1 domain. Residues 870–1013 (HDESSLPLPQ…RTRDVDSQYL (144 aa)) are disordered. Ser-881 is modified (phosphoserine). Polar residues predominate over residues 935-944 (STTLTVPEQQ). Ser-977 is modified (phosphoserine). A compositionally biased stretch (basic and acidic residues) spans 992-1009 (RHHDASRSPVDHRTRDVD). Ser-1031 carries the phosphoserine modification. Disordered stretches follow at residues 1118 to 1222 (NCLR…EHSS) and 1235 to 1278 (GGSA…PVRS). 2 stretches are compositionally biased toward basic and acidic residues: residues 1128–1144 (SPERERGRWSPSLDRRR) and 1157–1170 (PENDRHSRKSERSS). A Phosphoserine modification is found at Ser-1252. The span at 1252–1265 (SPTQSPPADTSFSS) shows a compositional bias: polar residues. Position 1254 is a phosphothreonine (Thr-1254). Phosphoserine is present on residues Ser-1256, Ser-1308, Ser-1310, Ser-1311, Ser-1339, Ser-1340, and Ser-1342. 3 disordered regions span residues 1332 to 1394 (CDNV…SGRS), 1408 to 1428 (LEHNDGSQSDTAVGTVGAGGK), and 1445 to 1495 (RSRS…GSIN). Residues 1345–1366 (SDVSAISRTSSASRLSSTSFMS) are compositionally biased toward low complexity. A Phosphoserine modification is found at Ser-1416. Over residues 1477–1490 (EMRKMVRQPSREST) the composition is skewed to basic and acidic residues. The region spanning 1538–1656 (AMGDIQIGME…DLSSMVIGWY (119 aa)) is the C2 2 domain. Ser-1677, Ser-1680, Ser-1683, and Ser-1692 each carry phosphoserine.

Binds RAB3A, RAB3B and RAB3D that have been activated by GTP-binding. Interacts with RAB3C, RAB10, RAB26 and RAB37. Binds UNC13A. Interacts with TSPOAP1 and RIMBP2. Interacts with PPFIA3 and PPFIA4. Interacts with ERC1. Binds SNAP25, SYT1 and CACNA1B. Interaction with SYT1 is enhanced by calcium ions. Interaction with SNAP25 is weaker in the presence of calcium ions. In terms of processing, phosphorylated by BRSK1. Expressed in melanocytes. Detected in brain and retina.

The protein resides in the cell membrane. It localises to the synapse. It is found in the presynaptic cell membrane. In terms of biological role, rab effector involved in exocytosis. May act as scaffold protein that regulates neurotransmitter release at the active zone. Essential for maintaining normal probability of neurotransmitter release and for regulating release during short-term synaptic plasticity. Plays a role in dendrite formation by melanocytes. The polypeptide is Regulating synaptic membrane exocytosis protein 1 (RIMS1) (Homo sapiens (Human)).